An 86-amino-acid chain; its full sequence is Cyclin-dependent kinase inhibitor 6 (86 aa).

The span at 1–15 shows a compositional bias: low complexity; it reads MAAAAATVTAVQPAA. Positions 1–23 are disordered; it reads MAAAAATVTAVQPAASSCGKRDG.

Belongs to the CDI family. ICK/KRP subfamily.

This chain is Cyclin-dependent kinase inhibitor 6 (KRP6), found in Oryza sativa subsp. japonica (Rice).